The chain runs to 333 residues: GTP 3',8-cyclase (333 aa).

Positions 7–221 (KFGRVHDYIR…FEACNEAGYE (215 aa)) constitute a Radical SAM core domain. Arginine 16 contacts GTP. [4Fe-4S] cluster contacts are provided by cysteine 23 and cysteine 27. Tyrosine 29 contributes to the S-adenosyl-L-methionine binding site. A [4Fe-4S] cluster-binding site is contributed by cysteine 30. Arginine 66 provides a ligand contact to GTP. An S-adenosyl-L-methionine-binding site is contributed by glycine 70. GTP is bound at residue threonine 97. Serine 121 provides a ligand contact to S-adenosyl-L-methionine. Lysine 158 contacts GTP. Methionine 192 contacts S-adenosyl-L-methionine. Cysteine 257 and cysteine 260 together coordinate [4Fe-4S] cluster. 262-264 (RLR) provides a ligand contact to GTP. Position 274 (cysteine 274) interacts with [4Fe-4S] cluster.

This sequence belongs to the radical SAM superfamily. MoaA family. Monomer and homodimer. [4Fe-4S] cluster is required as a cofactor.

It catalyses the reaction GTP + AH2 + S-adenosyl-L-methionine = (8S)-3',8-cyclo-7,8-dihydroguanosine 5'-triphosphate + 5'-deoxyadenosine + L-methionine + A + H(+). It participates in cofactor biosynthesis; molybdopterin biosynthesis. In terms of biological role, catalyzes the cyclization of GTP to (8S)-3',8-cyclo-7,8-dihydroguanosine 5'-triphosphate. The polypeptide is GTP 3',8-cyclase (Listeria monocytogenes serovar 1/2a (strain ATCC BAA-679 / EGD-e)).